A 656-amino-acid polypeptide reads, in one-letter code: Chaperone protein HtpG (656 aa).

Residues methionine 1–arginine 359 form an a; substrate-binding region. A b region spans residues glutamate 360 to arginine 575. Residues isoleucine 576–methionine 656 are c.

Belongs to the heat shock protein 90 family. Homodimer.

The protein localises to the cytoplasm. Its function is as follows. Molecular chaperone. Has ATPase activity. The polypeptide is Chaperone protein HtpG (Mycobacterium leprae (strain TN)).